The sequence spans 217 residues: MVQDLEQKLWSIASGIPFSSDYFLQASPIRKLKKENLFSKVFETYFLELGSGWGEVAISMALQRPNTGFILMEKKFDRIRHTIREIEKHSLDNVKILCVNFNWFLEEVFEENLFSEILLNFPDPWPKKRHHKKRTVNSKFLESLKILLPEKGKFYFATDYGPYARKVIRLFRDSKAFSPEKVELKSERNEIPVSHFERKKREEGKRIYYIDRVLVQK.

S-adenosyl-L-methionine-binding residues include Glu-48, Glu-73, Asn-100, and Asp-123. Asp-123 is an active-site residue. Lys-127 and Asp-159 together coordinate substrate.

Belongs to the class I-like SAM-binding methyltransferase superfamily. TrmB family.

It carries out the reaction guanosine(46) in tRNA + S-adenosyl-L-methionine = N(7)-methylguanosine(46) in tRNA + S-adenosyl-L-homocysteine. The protein operates within tRNA modification; N(7)-methylguanine-tRNA biosynthesis. Its function is as follows. Catalyzes the formation of N(7)-methylguanine at position 46 (m7G46) in tRNA. The protein is tRNA (guanine-N(7)-)-methyltransferase of Leptospira interrogans serogroup Icterohaemorrhagiae serovar Lai (strain 56601).